Reading from the N-terminus, the 398-residue chain is S-adenosylmethionine synthase (398 aa).

An ATP-binding site is contributed by H16. D18 provides a ligand contact to Mg(2+). E51 contacts K(+). E64 and Q108 together coordinate L-methionine. The flexible loop stretch occupies residues Q108–A118. Residues D176–K178, K242–F243, D251, R257–K258, A274, and K278 contribute to the ATP site. D251 is a binding site for L-methionine. K282 contacts L-methionine.

This sequence belongs to the AdoMet synthase family. Homotetramer; dimer of dimers. Mg(2+) serves as cofactor. The cofactor is K(+).

The protein resides in the cytoplasm. It carries out the reaction L-methionine + ATP + H2O = S-adenosyl-L-methionine + phosphate + diphosphate. Its pathway is amino-acid biosynthesis; S-adenosyl-L-methionine biosynthesis; S-adenosyl-L-methionine from L-methionine: step 1/1. Catalyzes the formation of S-adenosylmethionine (AdoMet) from methionine and ATP. The overall synthetic reaction is composed of two sequential steps, AdoMet formation and the subsequent tripolyphosphate hydrolysis which occurs prior to release of AdoMet from the enzyme. The chain is S-adenosylmethionine synthase from Bradyrhizobium diazoefficiens (strain JCM 10833 / BCRC 13528 / IAM 13628 / NBRC 14792 / USDA 110).